Consider the following 302-residue polypeptide: uncharacterized protein (302 aa).

A run of 7 helical transmembrane segments spans residues 25-45 (SFIF…LQIF), 58-78 (FSYL…VIAL), 104-124 (IQVG…WMFL), 158-178 (YGLL…ATVL), 182-202 (FAWA…QYVP), 215-235 (ALSI…GYLL), and 247-267 (MMYI…MFYL). The PQ-loop domain maps to 175 to 245 (ATVLSSNFAW…SRLPGTNWTT (71 aa)).

It is found in the membrane. This is an uncharacterized protein from Schizosaccharomyces pombe (strain 972 / ATCC 24843) (Fission yeast).